Consider the following 249-residue polypeptide: 14-3-3-like protein D (249 aa).

This sequence belongs to the 14-3-3 family.

The sequence is that of 14-3-3-like protein D from Nicotiana tabacum (Common tobacco).